A 297-amino-acid polypeptide reads, in one-letter code: Glycerol-3-phosphate dehydrogenase [NAD(P)+] (297 aa).

NADPH is bound by residues Trp-11, Arg-33, and Lys-79. Sn-glycerol 3-phosphate-binding residues include Lys-79, Gly-107, and Ser-109. Residue Ala-111 coordinates NADPH. Lys-161, Asp-214, Ser-224, Arg-225, and Asn-226 together coordinate sn-glycerol 3-phosphate. Lys-161 functions as the Proton acceptor in the catalytic mechanism. Arg-225 contacts NADPH. 2 residues coordinate NADPH: Val-249 and Glu-251.

Belongs to the NAD-dependent glycerol-3-phosphate dehydrogenase family.

The protein resides in the cytoplasm. It carries out the reaction sn-glycerol 3-phosphate + NAD(+) = dihydroxyacetone phosphate + NADH + H(+). The enzyme catalyses sn-glycerol 3-phosphate + NADP(+) = dihydroxyacetone phosphate + NADPH + H(+). It functions in the pathway membrane lipid metabolism; glycerophospholipid metabolism. Its function is as follows. Catalyzes the reduction of the glycolytic intermediate dihydroxyacetone phosphate (DHAP) to sn-glycerol 3-phosphate (G3P), the key precursor for phospholipid synthesis. This Campylobacter jejuni subsp. jejuni serotype O:6 (strain 81116 / NCTC 11828) protein is Glycerol-3-phosphate dehydrogenase [NAD(P)+].